Here is a 380-residue protein sequence, read N- to C-terminus: Alcohol dehydrogenase (380 aa).

Zn(2+)-binding residues include Cys48, Thr50, His70, Cys100, Cys103, Cys106, Cys114, and Cys178. The an alcohol site is built by Thr50 and His70. Thr50 provides a ligand contact to NAD(+). Residues 203–208 (GLGAVG), Asp227, Arg232, Thr273, Val296, 296–298 (VGV), Phe323, and Arg373 each bind NAD(+).

This sequence belongs to the zinc-containing alcohol dehydrogenase family. Homodimer. It depends on Zn(2+) as a cofactor.

It localises to the cytoplasm. The catalysed reaction is a primary alcohol + NAD(+) = an aldehyde + NADH + H(+). The enzyme catalyses a secondary alcohol + NAD(+) = a ketone + NADH + H(+). The polypeptide is Alcohol dehydrogenase (ADH) (Malus domestica (Apple)).